Here is a 98-residue protein sequence, read N- to C-terminus: uncharacterized protein (98 aa).

The next 2 membrane-spanning stretches (helical) occupy residues 14-34 (FLVI…PVTA) and 41-61 (MTGA…ASII).

Its subcellular location is the cell membrane. This is an uncharacterized protein from Haemophilus influenzae (strain ATCC 51907 / DSM 11121 / KW20 / Rd).